The sequence spans 288 residues: MTVDGQVGRWPVSAIPAAYMRPGSGSFTEFLAGAEPHLLPGRAGAQPAGAAPAVPHGTTIVALTCEQGVVVAGDRRATMGNIIAQRDIEKVFVADSHSAIGIAGTAGLAVEMVRLFRLELEHYEKIEGVRLSLDGKANRLATMIRGNLGMAMQGLAVVPLFAGVEEDPEVDPVKRGPGGGRIFSYDVAGGKYEEHDYYAVGSGSTFARSALKKRYNAAADLPGAVRTAVEALYDAADDDSATGGPDLTRRIFPVVVAITAQGAVRWSDDEVGVVAEAVVAGRMVNPGG.

Residues 1 to 57 constitute a propeptide, removed in mature form; by autocatalysis; that stretch reads MTVDGQVGRWPVSAIPAAYMRPGSGSFTEFLAGAEPHLLPGRAGAQPAGAAPAVPHG. The Nucleophile role is filled by T58.

The protein belongs to the peptidase T1B family. In terms of assembly, the 20S proteasome core is composed of 14 alpha and 14 beta subunits that assemble into four stacked heptameric rings, resulting in a barrel-shaped structure. The two inner rings, each composed of seven catalytic beta subunits, are sandwiched by two outer rings, each composed of seven alpha subunits. The catalytic chamber with the active sites is on the inside of the barrel. Has a gated structure, the ends of the cylinder being occluded by the N-termini of the alpha-subunits. Is capped by the proteasome-associated ATPase, ARC.

It localises to the cytoplasm. The enzyme catalyses Cleavage of peptide bonds with very broad specificity.. It participates in protein degradation; proteasomal Pup-dependent pathway. The formation of the proteasomal ATPase ARC-20S proteasome complex, likely via the docking of the C-termini of ARC into the intersubunit pockets in the alpha-rings, may trigger opening of the gate for substrate entry. Interconversion between the open-gate and close-gate conformations leads to a dynamic regulation of the 20S proteasome proteolysis activity. Functionally, component of the proteasome core, a large protease complex with broad specificity involved in protein degradation. The protein is Proteasome subunit beta of Nakamurella multipartita (strain ATCC 700099 / DSM 44233 / CIP 104796 / JCM 9543 / NBRC 105858 / Y-104) (Microsphaera multipartita).